The sequence spans 267 residues: Flap endonuclease Xni (267 aa).

Aspartate 115 lines the Mg(2+) pocket. Positions 171–261 constitute a 5'-3' exonuclease domain; it reads VAPAQLVDFW…LGFNLREIRY (91 aa). The K(+) site is built by leucine 182, valine 193, and isoleucine 196. The interaction with DNA stretch occupies residues 195–200; the sequence is GIGPKT.

Belongs to the Xni family. Mg(2+) is required as a cofactor. Requires K(+) as cofactor.

Functionally, has flap endonuclease activity. During DNA replication, flap endonucleases cleave the 5'-overhanging flap structure that is generated by displacement synthesis when DNA polymerase encounters the 5'-end of a downstream Okazaki fragment. The polypeptide is Flap endonuclease Xni (Aeromonas hydrophila subsp. hydrophila (strain ATCC 7966 / DSM 30187 / BCRC 13018 / CCUG 14551 / JCM 1027 / KCTC 2358 / NCIMB 9240 / NCTC 8049)).